A 491-amino-acid polypeptide reads, in one-letter code: Probable glycine dehydrogenase (decarboxylating) subunit 2 (491 aa).

Position 264 is an N6-(pyridoxal phosphate)lysine (K264).

This sequence belongs to the GcvP family. C-terminal subunit subfamily. The glycine cleavage system is composed of four proteins: P, T, L and H. In this organism, the P 'protein' is a heterodimer of two subunits. Pyridoxal 5'-phosphate serves as cofactor.

It catalyses the reaction N(6)-[(R)-lipoyl]-L-lysyl-[glycine-cleavage complex H protein] + glycine + H(+) = N(6)-[(R)-S(8)-aminomethyldihydrolipoyl]-L-lysyl-[glycine-cleavage complex H protein] + CO2. Its function is as follows. The glycine cleavage system catalyzes the degradation of glycine. The P protein binds the alpha-amino group of glycine through its pyridoxal phosphate cofactor; CO(2) is released and the remaining methylamine moiety is then transferred to the lipoamide cofactor of the H protein. The polypeptide is Probable glycine dehydrogenase (decarboxylating) subunit 2 (Coxiella burnetii (strain Dugway 5J108-111)).